The chain runs to 271 residues: Ribosomal RNA small subunit methyltransferase A (271 aa).

Residues His-11, Leu-13, Gly-38, Glu-58, Asp-86, and Asn-101 each contribute to the S-adenosyl-L-methionine site.

This sequence belongs to the class I-like SAM-binding methyltransferase superfamily. rRNA adenine N(6)-methyltransferase family. RsmA subfamily.

The protein localises to the cytoplasm. The enzyme catalyses adenosine(1518)/adenosine(1519) in 16S rRNA + 4 S-adenosyl-L-methionine = N(6)-dimethyladenosine(1518)/N(6)-dimethyladenosine(1519) in 16S rRNA + 4 S-adenosyl-L-homocysteine + 4 H(+). Functionally, specifically dimethylates two adjacent adenosines (A1518 and A1519) in the loop of a conserved hairpin near the 3'-end of 16S rRNA in the 30S particle. May play a critical role in biogenesis of 30S subunits. The sequence is that of Ribosomal RNA small subunit methyltransferase A from Helicobacter pylori (strain G27).